The sequence spans 414 residues: Imidazolonepropionase (414 aa).

Residues His-95 and His-97 each contribute to the Fe(3+) site. Positions 95 and 97 each coordinate Zn(2+). 4-imidazolone-5-propanoate-binding residues include Arg-104, Tyr-162, and His-189. Tyr-162 contacts N-formimidoyl-L-glutamate. Position 252 (His-252) interacts with Fe(3+). His-252 contacts Zn(2+). Gln-255 serves as a coordination point for 4-imidazolone-5-propanoate. Residue Asp-326 participates in Fe(3+) binding. Residue Asp-326 participates in Zn(2+) binding. 2 residues coordinate N-formimidoyl-L-glutamate: Asn-328 and Gly-330. Ser-331 contributes to the 4-imidazolone-5-propanoate binding site.

The protein belongs to the metallo-dependent hydrolases superfamily. HutI family. Zn(2+) is required as a cofactor. Requires Fe(3+) as cofactor.

The protein resides in the cytoplasm. It catalyses the reaction 4-imidazolone-5-propanoate + H2O = N-formimidoyl-L-glutamate. Its pathway is amino-acid degradation; L-histidine degradation into L-glutamate; N-formimidoyl-L-glutamate from L-histidine: step 3/3. Functionally, catalyzes the hydrolytic cleavage of the carbon-nitrogen bond in imidazolone-5-propanoate to yield N-formimidoyl-L-glutamate. It is the third step in the universal histidine degradation pathway. The polypeptide is Imidazolonepropionase (Streptomyces avermitilis (strain ATCC 31267 / DSM 46492 / JCM 5070 / NBRC 14893 / NCIMB 12804 / NRRL 8165 / MA-4680)).